A 427-amino-acid chain; its full sequence is Protein king tubby 1 (427 aa).

The interval 48–174 is disordered; the sequence is SPSNPDQIIS…ASGHNDAEGD (127 aa). A compositionally biased stretch (low complexity) spans 57-86; the sequence is SSSGSPTTVTATGTGTTTTTGSVTTTPTSP.

It belongs to the TUB family.

It localises to the cytoplasm. The protein localises to the nucleus. This Culex quinquefasciatus (Southern house mosquito) protein is Protein king tubby 1 (king-tubby1).